The following is a 399-amino-acid chain: Phosphoglycerate kinase (399 aa).

Substrate is bound by residues 22-24 (DFN), Arg38, 61-64 (HLGR), Arg120, and Arg153. ATP-binding positions include Lys204, Glu326, and 352–355 (GGDT).

It belongs to the phosphoglycerate kinase family. As to quaternary structure, monomer.

Its subcellular location is the cytoplasm. It catalyses the reaction (2R)-3-phosphoglycerate + ATP = (2R)-3-phospho-glyceroyl phosphate + ADP. It participates in carbohydrate degradation; glycolysis; pyruvate from D-glyceraldehyde 3-phosphate: step 2/5. In Citrifermentans bemidjiense (strain ATCC BAA-1014 / DSM 16622 / JCM 12645 / Bem) (Geobacter bemidjiensis), this protein is Phosphoglycerate kinase.